A 207-amino-acid polypeptide reads, in one-letter code: Homeobox protein BarH-like 1 (207 aa).

The homeobox DNA-binding region spans 95 to 154 (GRRSRTVFTELQLMGLEKRFEKQKYLSTPDRIDLAESLGLSQLQVKTWYQNRRMKWKKIV). Positions 157–207 (GGGLESPTKPKGRPKKNSIPSSEQLSEQERAKETEKPPESPGEPSERQQEE) are disordered. A compositionally biased stretch (basic and acidic residues) spans 183-207 (EQERAKETEKPPESPGEPSERQQEE).

This sequence belongs to the BAR homeobox family. Expressed predominantly in the facial primordia, developing stomach, and proximal limbs.

Its subcellular location is the nucleus. Transcription factor, which is involved in craniofacial development, in odontogenic region definition, and in stomach organogenesis. Binds to a regulatory module of the NCAM promoter. The chain is Homeobox protein BarH-like 1 (BARX1) from Gallus gallus (Chicken).